A 372-amino-acid chain; its full sequence is Glutamate 5-kinase (372 aa).

Lysine 14 is an ATP binding site. Residues serine 54, aspartate 141, and asparagine 153 each coordinate substrate. Residues 173-174 and 215-221 each bind ATP; these read TD and TGGMATK. The 79-residue stretch at 280–358 folds into the PUA domain; sequence RGKLILDQGA…DDIESLLGYD (79 aa).

This sequence belongs to the glutamate 5-kinase family.

It localises to the cytoplasm. It carries out the reaction L-glutamate + ATP = L-glutamyl 5-phosphate + ADP. It participates in amino-acid biosynthesis; L-proline biosynthesis; L-glutamate 5-semialdehyde from L-glutamate: step 1/2. Its function is as follows. Catalyzes the transfer of a phosphate group to glutamate to form L-glutamate 5-phosphate. The chain is Glutamate 5-kinase from Shewanella sediminis (strain HAW-EB3).